A 607-amino-acid polypeptide reads, in one-letter code: Siderochrome iron transporter 2 (607 aa).

The disordered stretch occupies residues Met1 to Leu46. Transmembrane regions (helical) follow at residues Val86–Ile106, Ile129–Trp149, Ala152–Cys172, Ala180–Val200, Ala210–Ala230, Trp242–Phe262, Ile297–Ala317, Ser326–Trp346, Leu367–Phe387, Tyr404–Val424, His432–Phe452, Ile459–Gly479, and Phe499–Tyr519. A glycan (N-linked (GlcNAc...) asparagine) is linked at Asn538. A helical membrane pass occupies residues Phe573–Lys593.

This sequence belongs to the major facilitator superfamily.

Its subcellular location is the cell membrane. Its function is as follows. Major facilitator transporter involved in ferrichrome (FC) uptake. This Aspergillus fumigatus (strain ATCC MYA-4609 / CBS 101355 / FGSC A1100 / Af293) (Neosartorya fumigata) protein is Siderochrome iron transporter 2.